The following is a 419-amino-acid chain: Isocitrate dehydrogenase [NADP] (419 aa).

Position 102 (T102) interacts with NADP(+). Residues S111, N113, R117, R127, and R151 each coordinate D-threo-isocitrate. D306 contributes to the Mg(2+) binding site. NADP(+) contacts are provided by residues 338–344, N351, Y390, and R394; that span reads HGSAPKY.

The protein belongs to the isocitrate and isopropylmalate dehydrogenases family. In terms of assembly, homodimer. It depends on Mg(2+) as a cofactor. The cofactor is Mn(2+).

It catalyses the reaction D-threo-isocitrate + NADP(+) = 2-oxoglutarate + CO2 + NADPH. Catalyzes the oxidative decarboxylation of isocitrate to 2-oxoglutarate and carbon dioxide with the concomitant reduction of NADP(+). In Haloferax volcanii (strain ATCC 29605 / DSM 3757 / JCM 8879 / NBRC 14742 / NCIMB 2012 / VKM B-1768 / DS2) (Halobacterium volcanii), this protein is Isocitrate dehydrogenase [NADP].